The sequence spans 875 residues: Probable ATP-dependent RNA helicase DDX10 (875 aa).

The segment at methionine 1–lysine 43 is disordered. Residue threonine 4 is modified to Phosphothreonine. A Phosphoserine modification is found at serine 7. The span at asparagine 21–leucine 41 shows a compositional bias: basic residues. A Q motif motif is present at residues threonine 69–lysine 97. Residues tyrosine 89–leucine 91, glutamine 96, and alanine 113–threonine 120 contribute to the ATP site. The Helicase ATP-binding domain occupies isoleucine 100 to valine 274. Positions aspartate 222–aspartate 225 match the DEAD box motif. The region spanning threonine 287–isoleucine 448 is the Helicase C-terminal domain. Serine 539 is modified (phosphoserine). An N6-acetyllysine modification is found at lysine 555. Residues glycine 562–glutamate 631 form a disordered region. Residues lysine 564 to asparagine 575 are compositionally biased toward basic and acidic residues. Threonine 577 carries the post-translational modification Phosphothreonine. Acidic residues predominate over residues threonine 577 to glutamate 593. Residues glutamine 603–alanine 613 are compositionally biased toward polar residues. Lysine 649 is covalently cross-linked (Glycyl lysine isopeptide (Lys-Gly) (interchain with G-Cter in SUMO2)). The tract at residues methionine 703–threonine 850 is disordered. Residues glutamate 727–arginine 741 show a composition bias toward basic and acidic residues. A compositionally biased stretch (basic residues) spans lysine 742–lysine 751. A compositionally biased stretch (basic and acidic residues) spans arginine 752–aspartate 771. Acidic residues predominate over residues glutamate 772–phenylalanine 790. Serine 780 is subject to Phosphoserine. A compositionally biased stretch (basic and acidic residues) spans methionine 812–lysine 821. A Phosphoserine modification is found at serine 831.

Belongs to the DEAD box helicase family. DDX10/DBP4 subfamily. As to quaternary structure, interacts with AIM2; this interaction promotes AIM2 stability. Interacts with SCNA; this interaction causes DDX10 mislocalization to the nucleoplasm and cytoplasmic inclusions. As to expression, high in testis but widely expressed.

It localises to the cytoplasm. It is found in the nucleus. The protein localises to the nucleolus. The catalysed reaction is ATP + H2O = ADP + phosphate + H(+). Functionally, putative ATP-dependent RNA helicase that plays various role in innate immunity or inflammation. Plays a role in the enhancement of AIM2-induced inflammasome activation by interacting with AIM2 and stabilizing its protein level. Negatively regulates viral infection by promoting interferon beta production and interferon stimulated genes/ISGs expression. This is Probable ATP-dependent RNA helicase DDX10 (DDX10) from Homo sapiens (Human).